Reading from the N-terminus, the 366-residue chain is Ribosomal RNA large subunit methyltransferase M (366 aa).

S-adenosyl-L-methionine is bound by residues Ser-188, 221–224 (CPGG), Asp-240, Asp-260, and Asp-277. The active-site Proton acceptor is Lys-306.

Belongs to the class I-like SAM-binding methyltransferase superfamily. RNA methyltransferase RlmE family. RlmM subfamily. As to quaternary structure, monomer.

It is found in the cytoplasm. It carries out the reaction cytidine(2498) in 23S rRNA + S-adenosyl-L-methionine = 2'-O-methylcytidine(2498) in 23S rRNA + S-adenosyl-L-homocysteine + H(+). Its function is as follows. Catalyzes the 2'-O-methylation at nucleotide C2498 in 23S rRNA. This chain is Ribosomal RNA large subunit methyltransferase M, found in Salmonella gallinarum (strain 287/91 / NCTC 13346).